A 233-amino-acid polypeptide reads, in one-letter code: Urease accessory protein UreF (233 aa).

It belongs to the UreF family. In terms of assembly, ureD, UreF and UreG form a complex that acts as a GTP-hydrolysis-dependent molecular chaperone, activating the urease apoprotein by helping to assemble the nickel containing metallocenter of UreC. The UreE protein probably delivers the nickel.

It is found in the cytoplasm. Functionally, required for maturation of urease via the functional incorporation of the urease nickel metallocenter. In Polaromonas sp. (strain JS666 / ATCC BAA-500), this protein is Urease accessory protein UreF.